Consider the following 30-residue polypeptide: uncharacterized protein (30 aa).

This is an uncharacterized protein from Saccharomyces cerevisiae (strain ATCC 204508 / S288c) (Baker's yeast).